The primary structure comprises 125 residues: Large ribosomal subunit protein bL12 (125 aa).

It belongs to the bacterial ribosomal protein bL12 family. In terms of assembly, homodimer. Part of the ribosomal stalk of the 50S ribosomal subunit. Forms a multimeric L10(L12)X complex, where L10 forms an elongated spine to which 2 to 4 L12 dimers bind in a sequential fashion. Binds GTP-bound translation factors.

Forms part of the ribosomal stalk which helps the ribosome interact with GTP-bound translation factors. Is thus essential for accurate translation. The sequence is that of Large ribosomal subunit protein bL12 from Alkalilimnicola ehrlichii (strain ATCC BAA-1101 / DSM 17681 / MLHE-1).